Here is a 353-residue protein sequence, read N- to C-terminus: tRNA N6-adenosine threonylcarbamoyltransferase (353 aa).

Fe cation contacts are provided by His-111 and His-115. Substrate is bound by residues 148 to 152, Asp-181, Gly-194, and Asn-286; that span reads LVSGG. Asp-314 contributes to the Fe cation binding site.

This sequence belongs to the KAE1 / TsaD family. Requires Fe(2+) as cofactor.

It localises to the cytoplasm. The catalysed reaction is L-threonylcarbamoyladenylate + adenosine(37) in tRNA = N(6)-L-threonylcarbamoyladenosine(37) in tRNA + AMP + H(+). Required for the formation of a threonylcarbamoyl group on adenosine at position 37 (t(6)A37) in tRNAs that read codons beginning with adenine. Is involved in the transfer of the threonylcarbamoyl moiety of threonylcarbamoyl-AMP (TC-AMP) to the N6 group of A37, together with TsaE and TsaB. TsaD likely plays a direct catalytic role in this reaction. This is tRNA N6-adenosine threonylcarbamoyltransferase from Blochmanniella floridana.